A 445-amino-acid polypeptide reads, in one-letter code: Histone acetyltransferase ESA1 (445 aa).

S17 is modified (phosphoserine). A Tudor-knot domain is found at 22 to 74 (IIKCQCWVQKNDEERLAEILSINTRKAPPKFYVHYVNYNKRLDEWITTDRINL). The tract at residues 88–114 (EDNKKQKKKKATNTSETPQDSLQDGVD) is disordered. The span at 99–109 (TNTSETPQDSL) shows a compositional bias: polar residues. An MYST-type HAT domain is found at 162 to 433 (ARVRNLNRII…IDPNRLIWKP (272 aa)). The C2HC MYST-type; degenerate zinc finger occupies 195–220 (IYIDDFTLQYFGSKKQYERYRKKCTL). The ESA1-RPD3 motif signature appears at 245 to 266 (RTWCRNLCLLSKLFLDHKTLYY). Residue K262 is modified to N6-acetyllysine; by autocatalysis. Acetyl-CoA is bound by residues 303 to 307 (ACILT) and 312 to 318 (QRMGYGK). The active-site Proton donor/acceptor is the E338. Position 342 (S342) interacts with acetyl-CoA.

It belongs to the MYST (SAS/MOZ) family. Component of the NuA4 histone acetyltransferase complex composed of at least ACT1, ARP4, EAF3, EAF5, EAF6, EAF7, EPL1, ESA1, SWC4, TRA1, VID21, YAF9 and YNG2. The complex interacts with histones H4 (HHF1 and HHF2), H3 (HHT1 and HHT2) and H2A (HTA1 and HTA2). Autoacetylation at Lys-262 is required for proper function.

It catalyses the reaction L-lysyl-[histone] + acetyl-CoA = N(6)-acetyl-L-lysyl-[histone] + CoA + H(+). The catalysed reaction is L-lysyl-[protein] + acetyl-CoA = N(6)-acetyl-L-lysyl-[protein] + CoA + H(+). The enzyme catalyses 2-hydroxyisobutanoyl-CoA + L-lysyl-[protein] = N(6)-(2-hydroxyisobutanoyl)-L-lysyl-[protein] + CoA + H(+). It carries out the reaction (2E)-butenoyl-CoA + L-lysyl-[protein] = N(6)-(2E)-butenoyl-L-lysyl-[protein] + CoA + H(+). Its function is as follows. Catalytic component of the NuA4 histone acetyltransferase (HAT), a multiprotein complex involved in epigenetic transcriptional activation of selected genes principally by acetylation of nucleosomal histones H4, H3, H2B, H2A and H2A variant H2A.Z. Acetylates histone H4 to form H4K5ac, H4K8ac, H4K12ac and H4K16ac, histone H3 to form H3K14ac, histone H2B to form H2BK16ac, histone H2A to form H2AK4ac and H2AK7ac, and histone variant H2A.Z to form H2A.ZK14ac. Acetylation of histones gives a specific tag for epigenetic transcription initiation and elongation. Acetylation of histone H4 is essential for DNA double-strand break repair through homologous recombination. Involved in cell cycle progression. Recruitment to promoters depends on H3K4me. Also acetylates non-histone proteins, such as ATG3 and PAH1. Regulates autophagy by acetylating ATG3, controlling interaction the interaction between ATG3 and ATG8 and ATG8 lipidation. Acts as a regulator of fatty-acid-induced triacylglycerol synthesis by catalyzing acetylation of PAH1, thereby promoting the synthesis of diacylglycerol. In addition to protein acetyltransferase, can use different acyl-CoA substrates, such as 2-hydroxyisobutanoyl-CoA (2-hydroxyisobutyryl-CoA) or (2E)-butenoyl-CoA (crotonyl-CoA), and is able to mediate protein 2-hydroxyisobutyrylation and crotonylation, respectively. Catalyzes histone crotonylation. The chain is Histone acetyltransferase ESA1 from Saccharomyces cerevisiae (strain ATCC 204508 / S288c) (Baker's yeast).